The sequence spans 270 residues: Small ribosomal subunit protein bS1m (270 aa).

The segment at 218–250 (TKQGFKHLGPKPLAYTEKKRETTKQSTKNNVFQ) is disordered.

This sequence belongs to the bacterial ribosomal protein bS1 family.

The protein resides in the mitochondrion. In Marchantia polymorpha (Common liverwort), this protein is Small ribosomal subunit protein bS1m (RPS1).